The primary structure comprises 372 residues: 3,5-dihydroxyphenylacetyl-CoA synthase (372 aa).

The active site involves C160.

This sequence belongs to the thiolase-like superfamily. Chalcone/stilbene synthases family.

The catalysed reaction is 4 malonyl-CoA + 4 H(+) = (3,5-dihydroxyphenyl)acetyl-CoA + 4 CO2 + 3 CoA + H2O. It functions in the pathway antibiotic biosynthesis. Functionally, involved in the biosynthesis of the nonproteinogenic amino acid monomer (S)-3,5-dihydroxyphenylglycine (Dpg) responsible of the production of balhimycin antibiotic. Catalyzes the Claisen condensation of four molecules of malonyl-CoA to yield 3,5-dihydroxyphenylacetyl-CoA (DPA-CoA) and three free coenzyme A (CoA). DpgA requires the presence of the dehydratases DpgB and DpgD to facilitate the aromatization of the DPA-S-DgpA or DPA-S-CoA intermediate. In Amycolatopsis balhimycina, this protein is 3,5-dihydroxyphenylacetyl-CoA synthase.